The following is a 227-amino-acid chain: UPF0173 metal-dependent hydrolase BCQ_4418 (227 aa).

It belongs to the UPF0173 family.

This chain is UPF0173 metal-dependent hydrolase BCQ_4418, found in Bacillus cereus (strain Q1).